We begin with the raw amino-acid sequence, 380 residues long: Queuine tRNA-ribosyltransferase (380 aa).

The active-site Proton acceptor is aspartate 96. Residues 96-100, aspartate 150, glutamine 193, and glycine 220 each bind substrate; that span reads DSGGF. Residues 251 to 257 form an RNA binding region; that stretch reads GVGAPDS. Residue aspartate 270 is the Nucleophile of the active site. Residues 275 to 279 form an RNA binding; important for wobble base 34 recognition region; the sequence is TRIAR. 4 residues coordinate Zn(2+): cysteine 308, cysteine 310, cysteine 313, and histidine 339.

Belongs to the queuine tRNA-ribosyltransferase family. As to quaternary structure, homodimer. Within each dimer, one monomer is responsible for RNA recognition and catalysis, while the other monomer binds to the replacement base PreQ1. It depends on Zn(2+) as a cofactor.

It carries out the reaction 7-aminomethyl-7-carbaguanine + guanosine(34) in tRNA = 7-aminomethyl-7-carbaguanosine(34) in tRNA + guanine. It functions in the pathway tRNA modification; tRNA-queuosine biosynthesis. In terms of biological role, catalyzes the base-exchange of a guanine (G) residue with the queuine precursor 7-aminomethyl-7-deazaguanine (PreQ1) at position 34 (anticodon wobble position) in tRNAs with GU(N) anticodons (tRNA-Asp, -Asn, -His and -Tyr). Catalysis occurs through a double-displacement mechanism. The nucleophile active site attacks the C1' of nucleotide 34 to detach the guanine base from the RNA, forming a covalent enzyme-RNA intermediate. The proton acceptor active site deprotonates the incoming PreQ1, allowing a nucleophilic attack on the C1' of the ribose to form the product. After dissociation, two additional enzymatic reactions on the tRNA convert PreQ1 to queuine (Q), resulting in the hypermodified nucleoside queuosine (7-(((4,5-cis-dihydroxy-2-cyclopenten-1-yl)amino)methyl)-7-deazaguanosine). This chain is Queuine tRNA-ribosyltransferase, found in Streptococcus pyogenes serotype M1.